A 463-amino-acid chain; its full sequence is L-seryl-tRNA(Sec) selenium transferase (463 aa).

Lys-295 is subject to N6-(pyridoxal phosphate)lysine.

It belongs to the SelA family. In terms of assembly, homodecamer; pentamer of dimers. Binds only one seryl-tRNA(Sec) per dimer. It depends on pyridoxal 5'-phosphate as a cofactor.

It is found in the cytoplasm. The catalysed reaction is L-seryl-tRNA(Sec) + selenophosphate + H(+) = L-selenocysteinyl-tRNA(Sec) + phosphate. It functions in the pathway aminoacyl-tRNA biosynthesis; selenocysteinyl-tRNA(Sec) biosynthesis; selenocysteinyl-tRNA(Sec) from L-seryl-tRNA(Sec) (bacterial route): step 1/1. Converts seryl-tRNA(Sec) to selenocysteinyl-tRNA(Sec) required for selenoprotein biosynthesis. This chain is L-seryl-tRNA(Sec) selenium transferase, found in Photorhabdus laumondii subsp. laumondii (strain DSM 15139 / CIP 105565 / TT01) (Photorhabdus luminescens subsp. laumondii).